The sequence spans 306 residues: Acetaldehyde dehydrogenase 2/3 (306 aa).

The active-site Acyl-thioester intermediate is the Cys130. Residues 161–169 (SAGPGTRKN) and Asn272 each bind NAD(+).

It belongs to the acetaldehyde dehydrogenase family.

It catalyses the reaction acetaldehyde + NAD(+) + CoA = acetyl-CoA + NADH + H(+). In Azoarcus sp. (strain BH72), this protein is Acetaldehyde dehydrogenase 2/3 (mhpF).